The following is a 211-amino-acid chain: ATP phosphoribosyltransferase (211 aa).

It belongs to the ATP phosphoribosyltransferase family. Short subfamily. As to quaternary structure, heteromultimer composed of HisG and HisZ subunits.

It localises to the cytoplasm. It carries out the reaction 1-(5-phospho-beta-D-ribosyl)-ATP + diphosphate = 5-phospho-alpha-D-ribose 1-diphosphate + ATP. It participates in amino-acid biosynthesis; L-histidine biosynthesis; L-histidine from 5-phospho-alpha-D-ribose 1-diphosphate: step 1/9. In terms of biological role, catalyzes the condensation of ATP and 5-phosphoribose 1-diphosphate to form N'-(5'-phosphoribosyl)-ATP (PR-ATP). Has a crucial role in the pathway because the rate of histidine biosynthesis seems to be controlled primarily by regulation of HisG enzymatic activity. The polypeptide is ATP phosphoribosyltransferase (Pseudomonas putida (strain ATCC 47054 / DSM 6125 / CFBP 8728 / NCIMB 11950 / KT2440)).